The following is a 279-amino-acid chain: HTH-type transcriptional regulator HdfR (279 aa).

The HTH lysR-type domain occupies 1-58; it reads MDTELLKTFLEVSRTRHFGRAAESLYLTQSAVSFRIRQLENQLGVNLFTRHRNNIRLT. Positions 18–37 form a DNA-binding region, H-T-H motif; that stretch reads FGRAAESLYLTQSAVSFRIR.

The protein belongs to the LysR transcriptional regulatory family.

Functionally, negatively regulates the transcription of the flagellar master operon flhDC by binding to the upstream region of the operon. The polypeptide is HTH-type transcriptional regulator HdfR (Escherichia coli O7:K1 (strain IAI39 / ExPEC)).